Reading from the N-terminus, the 1219-residue chain is N-acetylglucosamine-1-phosphotransferase subunits alpha/beta (1219 aa).

The chain crosses the membrane as a helical span at residues 27–47 (LCFGGLVLMIVSAFQFGEVVV). N-linked (GlcNAc...) asparagine glycosylation is found at Asn-88, Asn-119, Asn-153, Asn-292, and Asn-381. 4 disulfides stabilise this stretch: Cys-443–Cys-466, Cys-457–Cys-473, Cys-508–Cys-531, and Cys-522–Cys-538. 2 LNR repeats span residues 443-478 (CAEG…GSSR) and 508-538 (CNQG…VGDC). Asp-454 provides a ligand contact to Ca(2+). Asn-462 carries an N-linked (GlcNAc...) asparagine glycan. Positions 469, 472, 519, 534, and 537 each coordinate Ca(2+). 8 N-linked (GlcNAc...) asparagine glycosylation sites follow: Asn-554, Asn-610, Asn-617, Asn-645, Asn-696, Asn-726, Asn-823, and Asn-974. The tract at residues 640-666 (ELPKSNTSTPVRDKEEEPKPTVATPEP) is disordered. Residues 696–804 (NETLLPDEVK…DDVTTKAQSR (109 aa)) form the DMAP1-binding domain. Residues 970–1005 (VQQLNISEVFDEIDTDHSGVLSDREIRTLATRIHEL) form the EF-hand domain. Residues Asp-983, Asp-985, Ser-987, and Glu-994 each coordinate Ca(2+). 3 N-linked (GlcNAc...) asparagine glycosylation sites follow: Asn-1021, Asn-1029, and Asn-1094. The helical transmembrane segment at 1180–1200 (VLVTLVVFTVMSFFAEQLVML) threads the bilayer.

It belongs to the stealth family. As to quaternary structure, hexamer of two alpha, two beta and two gamma (GNPTG) subunits; disulfide-linked. The alpha and/or the beta subunits of the enzyme constitute the catalytic subunits. The alpha- and beta-subunits are generated by a proteolytic cleavage by mbtps1 protease at the Gln-893-Asp-894 bond.

Its subcellular location is the golgi apparatus membrane. The catalysed reaction is N(4)-[alpha-D-mannosyl-(1-&gt;2)-alpha-D-mannosyl-(glycan)]-L-asparaginyl-[protein] + UDP-N-acetyl-alpha-D-glucosamine = N(4)-[6-(N-acetyl-alpha-D-glucosaminyl-1-phospho)-alpha-D-mannosyl-(1-&gt;2)-alpha-D-mannosyl-(glycan)]-L-asparaginyl-[protein] + UMP + H(+). Catalyzes the formation of mannose 6-phosphate (M6P) markers on high mannose type oligosaccharides in the Golgi apparatus. M6P residues are required to bind to the M6P receptors (MPR), which mediate the vesicular transport of lysosomal enzymes to the endosomal/prelysosomal compartment. The polypeptide is N-acetylglucosamine-1-phosphotransferase subunits alpha/beta (gnptab) (Danio rerio (Zebrafish)).